Here is a 554-residue protein sequence, read N- to C-terminus: Solute carrier family 22 member 1 (554 aa).

Over 1–21 (MPTVDDILEQVGESGWFQKQA) the chain is Cytoplasmic. A helical transmembrane segment spans residues 22 to 42 (FLILCLLSAAFAPICVGIVFL). The Extracellular segment spans residues 43-149 (GFTPDHHCQS…LVCADSWKLD (107 aa)). N-linked (GlcNAc...) asparagine glycosylation occurs at Asn71. A helical transmembrane segment spans residues 150-170 (LFQSCLNAGFLFGSLGVGYFA). The Cytoplasmic portion of the chain corresponds to 171–176 (DRFGRK). Residues 177–197 (LCLLGTVLVNAVSGVLMAFSP) form a helical membrane-spanning segment. Residues 198–206 (NYMSMLLFR) are Extracellular-facing. The chain crosses the membrane as a helical span at residues 207-229 (LLQGLVSKGNWMAGYTLITEFVG). The Cytoplasmic segment spans residues 230-235 (SGSRRT). A helical membrane pass occupies residues 236 to 256 (VAIMYQMAFTVGLVALTGLAY). The Extracellular portion of the chain corresponds to 257–262 (ALPHWR). A helical transmembrane segment spans residues 263-283 (WLQLAVSLPTFLFLLYYWCVP). The Proline-rich sequence signature appears at 283-287 (PESPR). Residues 284 to 347 (ESPRWLLSQK…FRTPRLRKRT (64 aa)) lie on the Cytoplasmic side of the membrane. A Phosphoserine modification is found at Ser333. The chain crosses the membrane as a helical span at residues 348–368 (FILMYLWFTDSVLYQGLILHM). The Extracellular segment spans residues 369–376 (GATSGNLY). The chain crosses the membrane as a helical span at residues 377 to 397 (LDFLYSALVEIPGAFIALITI). The Cytoplasmic portion of the chain corresponds to 398 to 402 (DRVGR). The helical transmembrane segment at 403–423 (IYPMAMSNLLAGAACLVMIFI) threads the bilayer. The Extracellular segment spans residues 424–431 (SPDLHWLN). A helical membrane pass occupies residues 432–452 (IIIMCVGRMGITIAIQMICLV). Residues 453 to 464 (NAELYPTFVRNL) are Cytoplasmic-facing. Residues 465–485 (GVMVCSSLCDIGGIITPFIVF) traverse the membrane as a helical segment. Residues 486 to 492 (RLREVWQ) lie on the Extracellular side of the membrane. The chain crosses the membrane as a helical span at residues 493 to 513 (ALPLILFAVLGLLAAGVTLLL). Residues 514–554 (PETKGVALPETMKDAENLGRKAKPKENTIYLKVQTSEPSGT) are Cytoplasmic-facing. Phosphothreonine is present on Thr541.

Belongs to the major facilitator (TC 2.A.1) superfamily. Organic cation transporter (TC 2.A.1.19) family. In terms of processing, phosphorylated. Widely expressed with high level in liver. In liver, expressed around the central vein. Expressed in kidney. Expressed in small intestine enterocytes. Localized to peritubular myoid cells, Leydig cells and moderately to the basal membrane of Sertoli cells in testes. Expressed in tracheal and bronchial ciliated epithelium in the respiratory tract. Also expressed in skeletal muscle, stomach, spleen, heart, placentacolon, brain, granulycytes and lympohocytes. As to expression, expressed in liver and in glial cell lines. In terms of tissue distribution, expressed in glial cell lines. Not expressed in liver.

It is found in the basolateral cell membrane. The protein resides in the apical cell membrane. Its subcellular location is the lateral cell membrane. The protein localises to the basal cell membrane. It localises to the cell membrane. The catalysed reaction is 1-methylnicotinamide(out) = 1-methylnicotinamide(in). It carries out the reaction dopamine(out) = dopamine(in). The enzyme catalyses serotonin(out) = serotonin(in). It catalyses the reaction (R)-adrenaline(out) = (R)-adrenaline(in). The catalysed reaction is histamine(out) = histamine(in). It carries out the reaction guanidine(out) = guanidine(in). The enzyme catalyses acetylcholine(in) = acetylcholine(out). It catalyses the reaction thiamine(in) = thiamine(out). The catalysed reaction is agmatine(out) = agmatine(in). It carries out the reaction putrescine(out) = putrescine(in). The enzyme catalyses spermidine(in) = spermidine(out). It catalyses the reaction L-histidyl-L-proline diketopiperazine(in) = L-histidyl-L-proline diketopiperazine(out). The catalysed reaction is (R)-salsolinol(in) = (R)-salsolinol(out). It carries out the reaction prostaglandin F2alpha(out) = prostaglandin F2alpha(in). The enzyme catalyses prostaglandin E2(out) = prostaglandin E2(in). Its activity is regulated as follows. Phosphorylation of the transporter leads to changes in its substrate affinity, resulting in a regulation of the transport activity. In contrast with rat ortholog, ASP uptake is inhibited by protein kinase A (PKA) and C (PKC) activation. ASP uptake is also endogenously activated by calmodulin, the calmodulin-dependent kinase II and LCK tyrosine kinase. Inhibited by cGMP, most likely through a cGMP-binding protein that interacts with OCT1. Its function is as follows. Electrogenic voltage-dependent transporter that mediates the transport of a variety of organic cations such as endogenous bioactive amines, cationic drugs and xenobiotics. Functions as a pH- and Na(+)-independent, bidirectional transporter. Cation cellular uptake or release is driven by the electrochemical potential (i.e. membrane potential and concentration gradient) and substrate selectivity. Hydrophobicity is a major requirement for recognition in polyvalent substrates and inhibitors. Primarily expressed at the basolateral membrane of hepatocytes and proximal tubules and involved in the uptake and disposition of cationic compounds by hepatic and renal clearance from the blood flow. Most likely functions as an uptake carrier in enterocytes contributing to the intestinal elimination of organic cations from the systemic circulation. Transports endogenous monoamines such as N-1-methylnicotinamide (NMN), guanidine, histamine, neurotransmitters dopamine, serotonin and adrenaline. Also transports natural polyamines such as spermidine, agmatine and putrescine at low affinity, but relatively high turnover. Involved in the hepatic uptake of vitamin B1/thiamine, hence regulating hepatic lipid and energy metabolism. Mediates the bidirectional transport of acetylcholine (ACh) at the apical membrane of ciliated cell in airway epithelium, thereby playing a role in luminal release of ACh from bronchial epithelium. Transports dopaminergic neuromodulators cyclo(his-pro) and salsolinol with lower efficency. Also capable of transporting non-amine endogenous compounds such as prostaglandin E2 (PGE2) and prostaglandin F2-alpha (PGF2-alpha). May contribute to the transport of cationic compounds in testes across the blood-testis-barrier. Also involved in the uptake of xenobiotics tributylmethylammonium (TBuMA), quinidine, N-methyl-quinine (NMQ), N-methyl-quinidine (NMQD) N-(4,4-azo-n-pentyl)-quinuclidine (APQ), azidoprocainamide methoiodide (AMP), N-(4,4-azo-n-pentyl)-21-deoxyajmalinium (APDA) and 4-(4-(dimethylamino)styryl)-N-methylpyridinium (ASP). Mediates the uptake of 1-methyl-4-phenylpyridinium (MPP(+)). Functionally, not able to uptake 1-methyl-4-phenylpyridinium (MPP(+)). This is Solute carrier family 22 member 1 from Homo sapiens (Human).